Reading from the N-terminus, the 412-residue chain is Argininosuccinate synthase (412 aa).

Position 8–16 (8–16 (AYSGGLDTS)) interacts with ATP. Tyrosine 87 contacts L-citrulline. Glycine 117 contacts ATP. 3 residues coordinate L-aspartate: threonine 119, asparagine 123, and aspartate 124. Asparagine 123 contributes to the L-citrulline binding site. Arginine 127, serine 175, glutamate 259, and tyrosine 271 together coordinate L-citrulline.

This sequence belongs to the argininosuccinate synthase family. Type 1 subfamily. Homotetramer.

It localises to the cytoplasm. The enzyme catalyses L-citrulline + L-aspartate + ATP = 2-(N(omega)-L-arginino)succinate + AMP + diphosphate + H(+). It participates in amino-acid biosynthesis; L-arginine biosynthesis; L-arginine from L-ornithine and carbamoyl phosphate: step 2/3. The sequence is that of Argininosuccinate synthase from Clavibacter michiganensis subsp. michiganensis (strain NCPPB 382).